Here is a 400-residue protein sequence, read N- to C-terminus: ATP phosphoribosyltransferase regulatory subunit (400 aa).

The protein belongs to the class-II aminoacyl-tRNA synthetase family. HisZ subfamily. As to quaternary structure, heteromultimer composed of HisG and HisZ subunits.

The protein resides in the cytoplasm. It participates in amino-acid biosynthesis; L-histidine biosynthesis; L-histidine from 5-phospho-alpha-D-ribose 1-diphosphate: step 1/9. Functionally, required for the first step of histidine biosynthesis. May allow the feedback regulation of ATP phosphoribosyltransferase activity by histidine. The chain is ATP phosphoribosyltransferase regulatory subunit from Hahella chejuensis (strain KCTC 2396).